The sequence spans 181 residues: MKQLLDFLPLVIFFAVYKFFDIYIASGALIAATALQLIVTYALYKKLEKMHLITFAMVTVFGTLTLVFHDDSFIKWKVTIIYSLFAIALGVSQLLNKSILKSMLGKEMQVEDKIWARVTWYWVVFFASCGLVNIYVAFSLPLETWVNFKVFGLTALTLINTVLTVFYLYKHLPEDQRKELK.

5 helical membrane-spanning segments follow: residues 10-30 (LVIFFAVYKFFDIYIASGALI), 50-70 (MHLITFAMVTVFGTLTLVFHD), 80-100 (IIYSLFAIALGVSQLLNKSIL), 118-138 (VTWYWVVFFASCGLVNIYVAF), and 148-168 (FKVFGLTALTLINTVLTVFYL).

This sequence belongs to the YciB family.

The protein resides in the cell inner membrane. Functionally, plays a role in cell envelope biogenesis, maintenance of cell envelope integrity and membrane homeostasis. The sequence is that of Inner membrane-spanning protein YciB from Shewanella baltica (strain OS223).